Consider the following 179-residue polypeptide: MSQVSGTDVPDLGRRQFMNLLTFGTITGVAAGALYPIVKYFIPPSAGGTGGGVTAKDALGNDVIVSQFLTSHNAGDRTLAQGLKGDPTYLVVQEDKTLANYGINAVCTHLGCVVPWNASEEKFMCPCHGSQYNAEGKVVRGPAPLSLALAHANVTDNDKVVFSTWTETDFRTGEEPWWS.

A helical transmembrane segment spans residues 20–42 (LLTFGTITGVAAGALYPIVKYFI). The 102-residue stretch at 60-161 (GNDVIVSQFL…ANVTDNDKVV (102 aa)) folds into the Rieske domain. [2Fe-2S] cluster is bound by residues Cys107, His109, Cys125, and His128. Cysteines 112 and 127 form a disulfide.

Belongs to the Rieske iron-sulfur protein family. The 4 large subunits of the cytochrome b6-f complex are cytochrome b6, subunit IV (17 kDa polypeptide, PetD), cytochrome f and the Rieske protein, while the 4 small subunits are PetG, PetL, PetM and PetN. The complex functions as a dimer. [2Fe-2S] cluster is required as a cofactor.

The protein resides in the cellular thylakoid membrane. The catalysed reaction is 2 oxidized [plastocyanin] + a plastoquinol + 2 H(+)(in) = 2 reduced [plastocyanin] + a plastoquinone + 4 H(+)(out). Functionally, component of the cytochrome b6-f complex, which mediates electron transfer between photosystem II (PSII) and photosystem I (PSI), cyclic electron flow around PSI, and state transitions. The sequence is that of Cytochrome b6-f complex iron-sulfur subunit from Microcystis aeruginosa (strain NIES-843 / IAM M-2473).